Here is a 299-residue protein sequence, read N- to C-terminus: tRNA-cytidine(32) 2-sulfurtransferase (299 aa).

The PP-loop motif signature appears at S56–S61. 3 residues coordinate [4Fe-4S] cluster: C131, C134, and C222.

Belongs to the TtcA family. As to quaternary structure, homodimer. Requires Mg(2+) as cofactor. [4Fe-4S] cluster is required as a cofactor.

It is found in the cytoplasm. The enzyme catalyses cytidine(32) in tRNA + S-sulfanyl-L-cysteinyl-[cysteine desulfurase] + AH2 + ATP = 2-thiocytidine(32) in tRNA + L-cysteinyl-[cysteine desulfurase] + A + AMP + diphosphate + H(+). The protein operates within tRNA modification. Catalyzes the ATP-dependent 2-thiolation of cytidine in position 32 of tRNA, to form 2-thiocytidine (s(2)C32). The sulfur atoms are provided by the cysteine/cysteine desulfurase (IscS) system. This chain is tRNA-cytidine(32) 2-sulfurtransferase, found in Xylella fastidiosa (strain 9a5c).